Here is a 28-residue protein sequence, read N- to C-terminus: uncharacterized protein (28 aa).

This is an uncharacterized protein from Archaeoglobus fulgidus (strain ATCC 49558 / DSM 4304 / JCM 9628 / NBRC 100126 / VC-16).